The chain runs to 106 residues: Large ribosomal subunit protein bL21c (106 aa).

It belongs to the bacterial ribosomal protein bL21 family. In terms of assembly, part of the 50S ribosomal subunit.

The protein resides in the plastid. It localises to the chloroplast. In terms of biological role, this protein binds to 23S rRNA. The protein is Large ribosomal subunit protein bL21c of Gracilaria tenuistipitata var. liui (Red alga).